Reading from the N-terminus, the 143-residue chain is Transcription antitermination protein NusB (143 aa).

The protein belongs to the NusB family.

Involved in transcription antitermination. Required for transcription of ribosomal RNA (rRNA) genes. Binds specifically to the boxA antiterminator sequence of the ribosomal RNA (rrn) operons. This chain is Transcription antitermination protein NusB, found in Methylacidiphilum infernorum (isolate V4) (Methylokorus infernorum (strain V4)).